A 328-amino-acid chain; its full sequence is MFGLGIIVIAVIIVIALLVLFSFVPVGLWISAIAAGVKVGIGTLVGMRLRRVSPRKVIGPLIKAHKAGLNLTTNQLESHYLAGGNVDRVVDANIAAQRADINLPFERGAAIDLAGRDVLEAVQMSVNPKVIETPFITGVAMNGIEVKAKARITVRANISRLVGGSGEETIIARVGEGIVSTIGSSEHHTQVLENPDNISKTVLSKGLDSGTAFEILSIDIADVDIGKNIGADLQTEQALADKNIAQAKAEERRAMAVASEQEMKARVQEMRAKVVEAESEVPLAMAEALREGNLGVKDYYNLKNVEADTGMRNAINKRTEQNEDESPK.

2 helical membrane passes run 1-21 and 26-46; these read MFGL…LVLF and VGLW…TLVG.

Belongs to the flotillin-like FloA family. As to quaternary structure, homooligomerizes.

Its subcellular location is the cell membrane. The protein localises to the membrane raft. Found in functional membrane microdomains (FMM) that may be equivalent to eukaryotic membrane rafts. FMMs are highly dynamic and increase in number as cells age. Flotillins are thought to be important factors in membrane fluidity. The sequence is that of Flotillin-like protein FloA from Staphylococcus haemolyticus (strain JCSC1435).